A 744-amino-acid chain; its full sequence is Dual specificity protein kinase shkD (744 aa).

The segment at 1–276 (MKRFFSNLFK…SGPPEILPEE (276 aa)) is disordered. 3 stretches are compositionally biased toward low complexity: residues 25–70 (PTTS…NSNQ), 79–107 (SPST…SFTP), and 127–200 (TSTT…QTAS). Polar residues predominate over residues 201–210 (VNHTSSDQSL). Low complexity predominate over residues 211 to 236 (NAQNVTQTNNNNNNNNNNNNNNNANN). One can recognise a Protein kinase domain in the interval 277–534 (IDRTDFLGQG…EILFRLNEIL (258 aa)). Residues 283 to 291 (LGQGSFGSV) and Lys-304 contribute to the ATP site. Asp-400 (proton acceptor) is an active-site residue. Residues 641–734 (WFHGDIVREQ…LVPCPKFTQE (94 aa)) enclose the SH2 domain.

It belongs to the protein kinase superfamily. Ser/Thr protein kinase family. SH2 domain-containing protein kinase subfamily.

It is found in the membrane. It carries out the reaction L-seryl-[protein] + ATP = O-phospho-L-seryl-[protein] + ADP + H(+). It catalyses the reaction L-threonyl-[protein] + ATP = O-phospho-L-threonyl-[protein] + ADP + H(+). In terms of biological role, required for proper chemotaxis and phagocytosis; proper spatiotemporal control of F-actin levels in chemotaxing cells. Negative regulator of the PI3K (phosphatidylinositol 3 kinase) pathway. Predominantly phosphorylates serines and threonines and tyrosines at a lower level. The protein is Dual specificity protein kinase shkD (shkD) of Dictyostelium discoideum (Social amoeba).